A 416-amino-acid polypeptide reads, in one-letter code: D-amino acid dehydrogenase (416 aa).

3-17 is a binding site for FAD; it reads VIVLGAGIVGVTSAY.

It belongs to the DadA oxidoreductase family. FAD serves as cofactor.

It carries out the reaction a D-alpha-amino acid + A + H2O = a 2-oxocarboxylate + AH2 + NH4(+). It participates in amino-acid degradation; D-alanine degradation; NH(3) and pyruvate from D-alanine: step 1/1. In terms of biological role, oxidative deamination of D-amino acids. The chain is D-amino acid dehydrogenase from Rhizobium johnstonii (strain DSM 114642 / LMG 32736 / 3841) (Rhizobium leguminosarum bv. viciae).